A 278-amino-acid chain; its full sequence is Undecaprenyl-diphosphatase (278 aa).

The next 6 membrane-spanning stretches (helical) occupy residues 49-69 (ANTFKIVIQLGSILAVIVVFW), 97-117 (HVLIGLLPAAVLGLLFEDFID), 120-140 (LFSIDTVIIGLAAGAILMIAA), 197-217 (ADFTFIMAVPIMFGASALSLV), 226-246 (GDLGFYVVGFIASFGFALLSI), and 258-278 (LVPFAIYRLVLAAVLAVIVYM).

The protein belongs to the UppP family.

The protein localises to the cell membrane. It carries out the reaction di-trans,octa-cis-undecaprenyl diphosphate + H2O = di-trans,octa-cis-undecaprenyl phosphate + phosphate + H(+). In terms of biological role, catalyzes the dephosphorylation of undecaprenyl diphosphate (UPP). Confers resistance to bacitracin. This Exiguobacterium sibiricum (strain DSM 17290 / CCUG 55495 / CIP 109462 / JCM 13490 / 255-15) protein is Undecaprenyl-diphosphatase.